The sequence spans 144 residues: Maximins 1/H12 (144 aa).

Residues 1-18 (MNFKYIVAVSFLIASAYA) form the signal peptide. Residues 19–43 (RSEENDEQSLSQRDVLEEESLREIR) constitute a propeptide that is removed on maturation. N70 is subject to Asparagine amide. Residues 74–123 (TAEEHEVMKRLEVVMRDLDSLDYPEEASERETRDFNQEEIANLYTKKEKR) constitute a propeptide that is removed on maturation. At I143 the chain carries Isoleucine amide.

This sequence belongs to the bombinin family. As to expression, expressed by the skin glands.

The protein resides in the secreted. In terms of biological role, maximin-1 shows antibacterial activity against both Gram-positive and Gram-negative bacteria. It also shows antimicrobial activity against the fungus C.albicans, but not against A.flavus nor P.uticale. It has little hemolytic activity. It possess a significant cytotoxicity against tumor cell lines. It does not possess a significant anti-HIV activity. It shows high spermicidal activity. Maximin-H12 shows antimicrobial activity against bacteria and against the fungus C.albicans. Shows strong hemolytic activity. This is Maximins 1/H12 from Bombina maxima (Giant fire-bellied toad).